The following is a 464-amino-acid chain: Soluble pyridine nucleotide transhydrogenase (464 aa).

FAD is bound at residue 35–44 (DNRPLVGGNC).

It belongs to the class-I pyridine nucleotide-disulfide oxidoreductase family. Requires FAD as cofactor.

Its subcellular location is the cytoplasm. The catalysed reaction is NAD(+) + NADPH = NADH + NADP(+). In terms of biological role, conversion of NADPH, generated by peripheral catabolic pathways, to NADH, which can enter the respiratory chain for energy generation. The chain is Soluble pyridine nucleotide transhydrogenase from Stutzerimonas stutzeri (strain A1501) (Pseudomonas stutzeri).